Reading from the N-terminus, the 54-residue chain is uncharacterized protein (54 aa).

This is an uncharacterized protein from Haemophilus influenzae (strain ATCC 51907 / DSM 11121 / KW20 / Rd).